We begin with the raw amino-acid sequence, 242 residues long: Tryptophan synthase alpha chain (242 aa).

Active-site proton acceptor residues include glutamate 31 and aspartate 42.

The protein belongs to the TrpA family. In terms of assembly, tetramer of two alpha and two beta chains.

It catalyses the reaction (1S,2R)-1-C-(indol-3-yl)glycerol 3-phosphate + L-serine = D-glyceraldehyde 3-phosphate + L-tryptophan + H2O. It participates in amino-acid biosynthesis; L-tryptophan biosynthesis; L-tryptophan from chorismate: step 5/5. Functionally, the alpha subunit is responsible for the aldol cleavage of indoleglycerol phosphate to indole and glyceraldehyde 3-phosphate. The polypeptide is Tryptophan synthase alpha chain (Staphylococcus aureus (strain USA300)).